Reading from the N-terminus, the 530-residue chain is MTALNDTERAVRNWTAGRPHRPAPMRPPRSEETASERPSRYYPTWLPSRSFIAAVIAIGGMQLLATMDSTVAIVALPKIQNELSLSDAGRSWVITAYVLTFGGLMLLGGRLGDTIGRKRTFIVGVALFTISSVLCAVAWDEATLVIARLSQGVGSAIASPTGLALVATTFPKGPARNAATAVFAAMTAIGSVMGLVVGGALTEVSWRWAFLVNVPIGLVMIYLARTALRETNKERMKLDATGAILATLACTAAVFAFSIGPEKGWMSGITIGSGLVALAAAVAFVIVERTAENPVVPFHLFRDRNRLVTFSAILLAGGVMFSLTVCIGLYVQDILGYSALRAGVGFIPFVIAMGIGLGVSSQLVSRFSPRVLTIGGGYLLFGAMLYGSFFMHRGVPYFPNLVMPIVVGGIGIGMAVVPLTLSAIAGVGFDQIGPVSAIALMLQSLGGPLVLAVIQAVITSRTLYLGGTTGPVKFMNDVQLAALDHAYTYGLLWVAGAAIIVGGMALFIGYTPQQVAHAQEVKEAIDAGEL.

Basic and acidic residues-rich tracts occupy residues 1-11 (MTALNDTERAV) and 28-38 (PRSEETASERP). The interval 1 to 38 (MTALNDTERAVRNWTAGRPHRPAPMRPPRSEETASERP) is disordered. The Cytoplasmic segment spans residues 1–50 (MTALNDTERAVRNWTAGRPHRPAPMRPPRSEETASERPSRYYPTWLPSRS). Residues 51–71 (FIAAVIAIGGMQLLATMDSTV) form a helical membrane-spanning segment. Residues 72–91 (AIVALPKIQNELSLSDAGRS) are Extracellular-facing. The chain crosses the membrane as a helical span at residues 92–112 (WVITAYVLTFGGLMLLGGRLG). Over 113-119 (DTIGRKR) the chain is Cytoplasmic. The helical transmembrane segment at 120-140 (TFIVGVALFTISSVLCAVAWD) threads the bilayer. The Extracellular segment spans residues 141–150 (EATLVIARLS). A helical transmembrane segment spans residues 151–171 (QGVGSAIASPTGLALVATTFP). The Cytoplasmic segment spans residues 172-180 (KGPARNAAT). Residues 181–201 (AVFAAMTAIGSVMGLVVGGAL) form a helical membrane-spanning segment. The Extracellular portion of the chain corresponds to 202–203 (TE). Residues 204 to 224 (VSWRWAFLVNVPIGLVMIYLA) traverse the membrane as a helical segment. The Cytoplasmic portion of the chain corresponds to 225-239 (RTALRETNKERMKLD). The helical transmembrane segment at 240 to 260 (ATGAILATLACTAAVFAFSIG) threads the bilayer. Over 261 to 266 (PEKGWM) the chain is Extracellular. Residues 267–287 (SGITIGSGLVALAAAVAFVIV) form a helical membrane-spanning segment. Topologically, residues 288–306 (ERTAENPVVPFHLFRDRNR) are cytoplasmic. Residues 307 to 327 (LVTFSAILLAGGVMFSLTVCI) form a helical membrane-spanning segment. Residues 328-343 (GLYVQDILGYSALRAG) are Extracellular-facing. Residues 344–364 (VGFIPFVIAMGIGLGVSSQLV) form a helical membrane-spanning segment. At 365–370 (SRFSPR) the chain is on the cytoplasmic side. Residues 371–391 (VLTIGGGYLLFGAMLYGSFFM) form a helical membrane-spanning segment. Residues 392–400 (HRGVPYFPN) lie on the Extracellular side of the membrane. The chain crosses the membrane as a helical span at residues 401 to 421 (LVMPIVVGGIGIGMAVVPLTL). Over 422-437 (SAIAGVGFDQIGPVSA) the chain is Cytoplasmic. Residues 438–458 (IALMLQSLGGPLVLAVIQAVI) form a helical membrane-spanning segment. Residues 459-488 (TSRTLYLGGTTGPVKFMNDVQLAALDHAYT) are Extracellular-facing. A helical membrane pass occupies residues 489–509 (YGLLWVAGAAIIVGGMALFIG). Residues 510–530 (YTPQQVAHAQEVKEAIDAGEL) are Cytoplasmic-facing.

The protein belongs to the major facilitator superfamily.

The protein localises to the cell membrane. This is an uncharacterized protein from Mycobacterium tuberculosis (strain CDC 1551 / Oshkosh).